The following is a 126-amino-acid chain: Small ribosomal subunit protein uS11 (126 aa).

The protein belongs to the universal ribosomal protein uS11 family. As to quaternary structure, part of the 30S ribosomal subunit.

Located on the platform of the 30S subunit. This chain is Small ribosomal subunit protein uS11, found in Methanosarcina acetivorans (strain ATCC 35395 / DSM 2834 / JCM 12185 / C2A).